Here is a 254-residue protein sequence, read N- to C-terminus: MRSIARRTAVGAALLLVMPVAVWISGWRWQPGEQSWLLKAAFWVTETVTQPWGVITHLILFGWFLWCLRFRIKAAFVLFAILAAAILVGQGVKSWIKDKVQEPRPFVIWLEKTHHIPVDEFYTLKRAERGNLVKEQLAEEKNIPQYLRSHWQKETGFAFPSGHTMFAASWALLAVGLLWPRRRTLTIAILLVWATGVMGSRLLLGMHWPRDLVVATLISWALVAVATWLAQRICGPLTPPAEENREIAQREQES.

The helical transmembrane segment at 2-24 (RSIARRTAVGAALLLVMPVAVWI) threads the bilayer. At 25–54 (SGWRWQPGEQSWLLKAAFWVTETVTQPWGV) the chain is on the periplasmic side. The helical transmembrane segment at 55–66 (ITHLILFGWFLW) threads the bilayer. Over 67-71 (CLRFR) the chain is Cytoplasmic. The chain crosses the membrane as a helical span at residues 72–94 (IKAAFVLFAILAAAILVGQGVKS). At 95–161 (WIKDKVQEPR…QKETGFAFPS (67 aa)) the chain is on the periplasmic side. Residues 97 to 105 (KDKVQEPRP) form a phosphatase sequence motif I region. The segment at 160 to 163 (PSGH) is phosphatase sequence motif II. A helical membrane pass occupies residues 162–176 (GHTMFAASWALLAVG). Histidine 163 functions as the Proton donor; for a subset of substrates in the catalytic mechanism. Over 177–182 (LLWPRR) the chain is Cytoplasmic. The helical transmembrane segment at 183 to 202 (RTLTIAILLVWATGVMGSRL) threads the bilayer. The interval 200–211 (SRLLLGMHWPRD) is phosphatase sequence motif III. Topologically, residues 203–208 (LLGMHW) are periplasmic. The active-site Nucleophile is the histidine 207. A helical transmembrane segment spans residues 209–232 (PRDLVVATLISWALVAVATWLAQR). Residues 233–254 (ICGPLTPPAEENREIAQREQES) lie on the Cytoplasmic side of the membrane.

Belongs to the PA-phosphatase related phosphoesterase family. In terms of processing, the N-terminus is blocked.

It localises to the cell inner membrane. The protein resides in the cell outer membrane. It catalyses the reaction a 1,2-diacyl-sn-glycero-3-phospho-(1'-sn-glycero-3'-phosphate) + H2O = a 1,2-diacyl-sn-glycero-3-phospho-(1'-sn-glycerol) + phosphate. The enzyme catalyses a 1,2-diacyl-sn-glycerol 3-diphosphate + H2O = a 1,2-diacyl-sn-glycero-3-phosphate + phosphate + H(+). It carries out the reaction a 1,2-diacyl-sn-glycero-3-phosphate + H2O = a 1,2-diacyl-sn-glycerol + phosphate. The catalysed reaction is di-trans,octa-cis-undecaprenyl diphosphate + H2O = di-trans,octa-cis-undecaprenyl phosphate + phosphate + H(+). It participates in phospholipid metabolism; phosphatidylglycerol biosynthesis; phosphatidylglycerol from CDP-diacylglycerol: step 2/2. Its function is as follows. Catalyzes the dephosphorylation of diacylglycerol diphosphate (DGPP) to phosphatidate (PA) and the subsequent dephosphorylation of PA to diacylglycerol (DAG). Also has undecaprenyl pyrophosphate phosphatase activity, required for the biosynthesis of the lipid carrier undecaprenyl phosphate. Can also use lysophosphatidic acid (LPA) and phosphatidylglycerophosphate as substrates. The pattern of activities varies according to subcellular location, PGP phosphatase activity is higher in the cytoplasmic membrane, whereas PA and LPA phosphatase activities are higher in the outer membrane. Activity is independent of a divalent cation ion and insensitive to inhibition by N-ethylmaleimide. The sequence is that of Phosphatidylglycerophosphatase B (pgpB) from Escherichia coli O157:H7.